The primary structure comprises 439 residues: Xylose isomerase (439 aa).

Residues His101 and Asp104 contribute to the active site. Mg(2+) is bound by residues Glu232, Glu268, His271, Asp296, Asp307, Asp309, and Asp339.

The protein belongs to the xylose isomerase family. In terms of assembly, homotetramer. Requires Mg(2+) as cofactor.

The protein resides in the cytoplasm. The enzyme catalyses alpha-D-xylose = alpha-D-xylulofuranose. The protein is Xylose isomerase (xylA) of Thermoanaerobacterium saccharolyticum.